The primary structure comprises 358 residues: uncharacterized protein (358 aa).

This is an uncharacterized protein from Klebsiella pneumoniae.